The primary structure comprises 834 residues: Periplasmic nitrate reductase (834 aa).

Residues 1–29 (MSLTRRQFAKANAAAIAATVAGMPIASTA) constitute a signal peptide (tat-type signal). The region spanning 41–97 (LKWDKAPCRFCGTGCGVMVATRENRVVATHGDVKADVNRGINCVKGYFLSKIMYGTD) is the 4Fe-4S Mo/W bis-MGD-type domain. [4Fe-4S] cluster is bound by residues Cys48, Cys51, Cys55, and Cys83. Mo-bis(molybdopterin guanine dinucleotide) contacts are provided by residues Lys85, Gln152, Asn177, Cys181, 214–221 (WGSNMAEM), 245–249 (STFEH), 264–266 (QTD), Met375, Gln379, Asn485, 511–512 (SD), Lys534, Asp561, and 721–730 (TGRVLEHWHT). Phe797 provides a ligand contact to substrate. 2 residues coordinate Mo-bis(molybdopterin guanine dinucleotide): Asn805 and Lys822.

It belongs to the prokaryotic molybdopterin-containing oxidoreductase family. NasA/NapA/NarB subfamily. In terms of assembly, component of the periplasmic nitrate reductase NapAB complex composed of NapA and NapB. [4Fe-4S] cluster is required as a cofactor. Mo-bis(molybdopterin guanine dinucleotide) serves as cofactor. Post-translationally, predicted to be exported by the Tat system. The position of the signal peptide cleavage has not been experimentally proven.

It is found in the periplasm. The enzyme catalyses 2 Fe(II)-[cytochrome] + nitrate + 2 H(+) = 2 Fe(III)-[cytochrome] + nitrite + H2O. Functionally, catalytic subunit of the periplasmic nitrate reductase complex NapAB. Receives electrons from NapB and catalyzes the reduction of nitrate to nitrite. The protein is Periplasmic nitrate reductase of Stutzerimonas stutzeri (Pseudomonas stutzeri).